Here is a 304-residue protein sequence, read N- to C-terminus: Thyroxine 5-deiodinase (304 aa).

The interval 1–22 (MPRQAASRLVVGEGEGPPGASG) is disordered. Topologically, residues 1-42 (MPRQAASRLVVGEGEGPPGASGPAATMLRSLLLHSLRLCAQT) are cytoplasmic. Residues 43 to 62 (ASCLVLFPRFLGTAFMLWLL) form a helical; Signal-anchor for type II membrane protein membrane-spanning segment. Over 63-304 (DFLCIRKHFL…QLHGTRPRRL (242 aa)) the chain is Extracellular. The active site involves Sec170. Position 170 (Sec170) is a non-standard amino acid, selenocysteine.

It belongs to the iodothyronine deiodinase family. In terms of assembly, monomer. Homodimer. May undergo minor heretodimerization with DIO1 and DIO2. As to expression, neonatal skin, placenta, skeletal muscle and cerebral cortex.

The protein resides in the cell membrane. Its subcellular location is the endosome membrane. It carries out the reaction 3,3',5'-triiodo-L-thyronine + iodide + A + H(+) = L-thyroxine + AH2. The catalysed reaction is 3,3'-diiodo-L-thyronine + iodide + A + H(+) = 3,3',5-triiodo-L-thyronine + AH2. It catalyses the reaction 3-iodo-L-thyronine + iodide + A + H(+) = 3,5-diiodo-L-thyronine + AH2. The enzyme catalyses L-thyronine + iodide + A + H(+) = 3-iodo-L-thyronine + AH2. It carries out the reaction 3',5'-diiodo-L-thyronine + iodide + A + H(+) = 3,3',5'-triiodo-L-thyronine + AH2. The catalysed reaction is 3'-iodo-L-thyronine + iodide + A + H(+) = 3,3'-diiodo-L-thyronine + AH2. It catalyses the reaction 3,3',5'-triiodothyronamine + iodide + A + H(+) = 3,3',5,5'-tetraiodothyronamine + AH2. The enzyme catalyses 3',5'-diiodothyronamine + iodide + A + H(+) = 3,3',5'-triiodothyronamine + AH2. It carries out the reaction 3,3'-diiodothyronamine + iodide + A + H(+) = 3,3',5-triiodothyronamine + AH2. The catalysed reaction is 3-iodothyronamine + iodide + A + H(+) = 3,5-diiodothyronamine + AH2. It catalyses the reaction 3'-iodothyronamine + iodide + A + H(+) = 3,3'-diiodothyronamine + AH2. The enzyme catalyses thyronamine + iodide + A + H(+) = 3-iodothyronamine + AH2. In terms of biological role, plays a crucial role in the metabolism of thyroid hormones (TH) and has specific roles in TH activation and inactivation by deiodination. Catalyzes the deiodination of L-thyroxine (T4) to 3,3',5'-triiodothyronine (rT3), 3,5-diiodothyronine (3,5-T2) to 3-monoiodothyronine (3-T1), rT3 to 3',5'-diiodothyronine (3',5'-T2) and 3,3'-diiodothyronine (3,3'-T2) to 3'-monoiodothyronine (3'-T1) via inner-ring deiodination (IRD). Catalyzes the deiodination of 3,5,3'-triiodothyronine (T3) to 3,3'-diiodothyronine (3,3'-T2) via IRD. Catalyzes the deiodination of 3-T1 to L-thyronine (T0) via outer-ring deiodination (ORD). Catalyzes the tyrosyl ring deiodinations of T4AM (3,3',5,5'-tetraiodothyronamine), rT3AM (3,3',5'-triiodothyronamine), T3AM (3,5,3'-triiodothyronamine), 3,5-T2AM (3,5-diiodothyronamine), 3,3'-T2AM (3,3'-diiodothyronamine) and 3-T1AM (3-iodothyronamine). The chain is Thyroxine 5-deiodinase (Dio3) from Rattus norvegicus (Rat).